A 114-amino-acid chain; its full sequence is RNA polymerase-binding protein RbpA (114 aa).

It belongs to the RNA polymerase-binding protein RbpA family. Monomer. Forms a complex with the RNAP catalytic core, specifically with the beta subunit (RpoB); its binding site may overlap with that of Rif. May bind free principal sigma factors.

Binds to RNA polymerase (RNAP), probably stimulating transcriptions from principal, but not alternative sigma factor promoters. Partially restores transcription in the presence of rifampicin (Rif) in vitro; overexpression leads to an increase in the Rif tolerance in vivo, with smaller colonies. Seems to act by removing Rif from its binding site and preventing its further binding. No longer stimulates transcription in Rif-resistant RNA polymerase (with mutations in rpoB). In Mycolicibacterium smegmatis (strain ATCC 700084 / mc(2)155) (Mycobacterium smegmatis), this protein is RNA polymerase-binding protein RbpA.